The primary structure comprises 328 residues: Arylacetonitrilase (328 aa).

The 274-residue stretch at 5-278 (VRVAVTQAEP…EGIIYADLDF (274 aa)) folds into the CN hydrolase domain. E45 serves as the catalytic Proton acceptor. K125 is a catalytic residue. The active-site Nucleophile is C160.

This sequence belongs to the carbon-nitrogen hydrolase superfamily. Nitrilase family.

It carries out the reaction a nitrile + 2 H2O = a carboxylate + NH4(+). The enzyme catalyses 4-chlorophenylacetonitrile + 2 H2O = 4-chlorophenylacetate + NH4(+). Functionally, nitrilase that hydrolyzes preferentially phenylacetonitrile, (R,S)-mandelonitrile, and 3-indolylacetonitrile. This is Arylacetonitrilase from Aspergillus niger (strain ATCC MYA-4892 / CBS 513.88 / FGSC A1513).